The primary structure comprises 162 residues: Cyclic pyranopterin monophosphate synthase (162 aa).

Substrate contacts are provided by residues 79-81 (LCH) and 117-118 (ME). The active site involves aspartate 132.

The protein belongs to the MoaC family. In terms of assembly, homohexamer; trimer of dimers.

The catalysed reaction is (8S)-3',8-cyclo-7,8-dihydroguanosine 5'-triphosphate = cyclic pyranopterin phosphate + diphosphate. It participates in cofactor biosynthesis; molybdopterin biosynthesis. Functionally, catalyzes the conversion of (8S)-3',8-cyclo-7,8-dihydroguanosine 5'-triphosphate to cyclic pyranopterin monophosphate (cPMP). This Bordetella petrii (strain ATCC BAA-461 / DSM 12804 / CCUG 43448) protein is Cyclic pyranopterin monophosphate synthase.